Reading from the N-terminus, the 174-residue chain is Isomerase prhC (174 aa).

The protein belongs to the trt14 isomerase family. As to quaternary structure, homodimer.

Its pathway is secondary metabolite biosynthesis; terpenoid biosynthesis. Isomerase; part of the gene cluster that mediates the biosynthesis of paraherquonin, a meroterpenoid with a unique, highly congested hexacyclic molecular architecture. The first step of the pathway is the synthesis of 3,5-dimethylorsellinic acid (DMOA) by the polyketide synthase prhL. Synthesis of DMOA is followed by farnesylation by the prenyltransferase prhE, methylesterification by the methyl-transferase prhM, epoxidation of the prenyl chain by the flavin-dependent monooxygenase prhF, and cyclization of the farnesyl moiety by the terpene cyclase prhH, to yield the tetracyclic intermediate, protoaustinoid A. The short chain dehydrogenase prhI then oxidizes the C-3 alcohol group of the terpene cyclase product to transform protoaustinoid A into protoaustinoid B. The FAD-binding monooxygenase prhJ catalyzes the oxidation of protoaustinoid B into preaustinoid A which is further oxidized into preaustinoid A1 by FAD-binding monooxygenase phrK. Finally, prhA leads to berkeleydione via the berkeleyone B intermediate. PrhA is a multifunctional dioxygenase that first desaturates at C5-C6 to form berkeleyone B, followed by rearrangement of the A/B-ring to form the cycloheptadiene moiety in berkeleydione. Berkeleydione serves as the key intermediate for the biosynthesis of paraherquonin as well as many other meroterpenoids. The cytochrome P450 monooxygenases prhB, prhD, and prhN, as well as the isomerase prhC, are probably involved in the late stage of paraherquonin biosynthesis, after the production of berkeleydione. Especially prhC might be a multifunctional enzyme that catalyzes the D-ring expansion via intramolecular methoxy rearrangement, as well as the hydrolysis of the expanded D-ring. The sequence is that of Isomerase prhC from Penicillium brasilianum.